The primary structure comprises 286 residues: Shikimate dehydrogenase (NADP(+)) (286 aa).

Residues 22-24 (SFS) and Thr-69 contribute to the shikimate site. The active-site Proton acceptor is Lys-73. Position 85 (Glu-85) interacts with NADP(+). Shikimate-binding residues include Asn-94 and Asp-109. Residues 133–137 (GAGGA), 157–162 (NRTIDK), and Leu-231 contribute to the NADP(+) site. Shikimate is bound at residue Tyr-233. Gly-254 provides a ligand contact to NADP(+).

This sequence belongs to the shikimate dehydrogenase family. In terms of assembly, homodimer.

The enzyme catalyses shikimate + NADP(+) = 3-dehydroshikimate + NADPH + H(+). Its pathway is metabolic intermediate biosynthesis; chorismate biosynthesis; chorismate from D-erythrose 4-phosphate and phosphoenolpyruvate: step 4/7. Involved in the biosynthesis of the chorismate, which leads to the biosynthesis of aromatic amino acids. Catalyzes the reversible NADPH linked reduction of 3-dehydroshikimate (DHSA) to yield shikimate (SA). The sequence is that of Shikimate dehydrogenase (NADP(+)) from Alkaliphilus oremlandii (strain OhILAs) (Clostridium oremlandii (strain OhILAs)).